Here is a 422-residue protein sequence, read N- to C-terminus: L-threonine dehydratase biosynthetic IlvA (422 aa).

Position 56 is an N6-(pyridoxal phosphate)lysine (lysine 56). Residues asparagine 83, glycine 189 to leucine 193, and serine 315 each bind pyridoxal 5'-phosphate. The 75-residue stretch at histidine 339 to glutamate 413 folds into the ACT-like domain.

It belongs to the serine/threonine dehydratase family. As to quaternary structure, homotetramer. Requires pyridoxal 5'-phosphate as cofactor.

The catalysed reaction is L-threonine = 2-oxobutanoate + NH4(+). It functions in the pathway amino-acid biosynthesis; L-isoleucine biosynthesis; 2-oxobutanoate from L-threonine: step 1/1. In terms of biological role, catalyzes the anaerobic formation of alpha-ketobutyrate and ammonia from threonine in a two-step reaction. The first step involved a dehydration of threonine and a production of enamine intermediates (aminocrotonate), which tautomerizes to its imine form (iminobutyrate). Both intermediates are unstable and short-lived. The second step is the nonenzymatic hydrolysis of the enamine/imine intermediates to form 2-ketobutyrate and free ammonia. In the low water environment of the cell, the second step is accelerated by RidA. This chain is L-threonine dehydratase biosynthetic IlvA (ilvA), found in Staphylococcus epidermidis (strain ATCC 12228 / FDA PCI 1200).